A 942-amino-acid chain; its full sequence is Glutamyl aminopeptidase (942 aa).

Over 1–14 (MSTDSKRYCIKTKH) the chain is Cytoplasmic. Residues 15 to 35 (VAIICAAVVAVGLIVGLSVGL) form a helical; Signal-anchor for type II membrane protein membrane-spanning segment. The Extracellular segment spans residues 36-942 (TRSCDSKDGG…RDTIRDWFFN (907 aa)). Residues 40 to 74 (DSKDGGQGTTQSPSHLPPTSSPPQDQGVCPASEDE) are disordered. Asn-110, Asn-114, and Asn-187 each carry an N-linked (GlcNAc...) asparagine glycan. Glu-213 contributes to the substrate binding site. N-linked (GlcNAc...) asparagine glycosylation is present at Asn-314. 347–351 (GAMEN) is a substrate binding site. N-linked (GlcNAc...) asparagine glycosylation is present at Asn-367. Residue His-383 participates in Zn(2+) binding. Residue Glu-384 is the Proton acceptor of the active site. His-387 and Glu-406 together coordinate Zn(2+). N-linked (GlcNAc...) asparagine glycans are attached at residues Asn-557, Asn-579, Asn-587, Asn-597, Asn-632, Asn-668, Asn-753, Asn-786, and Asn-791. Arg-877 contacts substrate.

The protein belongs to the peptidase M1 family. Homodimer; disulfide-linked. Requires Zn(2+) as cofactor.

It is found in the cell membrane. The catalysed reaction is Release of N-terminal glutamate (and to a lesser extent aspartate) from a peptide.. With respect to regulation, substrate specificity is modulated by calcium which enhances the enzymatic activity for cleavage of acidic residues while reducing its activity with basic residues. Inhibited by aminopeptidase inhibitors amastatin and bestatin. In terms of biological role, regulates central hypertension through its calcium-modulated preference to cleave N-terminal acidic residues from peptides such as angiotensin II. This chain is Glutamyl aminopeptidase (ENPEP), found in Sus scrofa (Pig).